Here is a 182-residue protein sequence, read N- to C-terminus: Crossover junction endodeoxyribonuclease RuvC (182 aa).

Residues D7, E69, and D141 contribute to the active site. Residues D7, E69, and D141 each coordinate Mg(2+).

Belongs to the RuvC family. As to quaternary structure, homodimer which binds Holliday junction (HJ) DNA. The HJ becomes 2-fold symmetrical on binding to RuvC with unstacked arms; it has a different conformation from HJ DNA in complex with RuvA. In the full resolvosome a probable DNA-RuvA(4)-RuvB(12)-RuvC(2) complex forms which resolves the HJ. The cofactor is Mg(2+).

Its subcellular location is the cytoplasm. It carries out the reaction Endonucleolytic cleavage at a junction such as a reciprocal single-stranded crossover between two homologous DNA duplexes (Holliday junction).. Its function is as follows. The RuvA-RuvB-RuvC complex processes Holliday junction (HJ) DNA during genetic recombination and DNA repair. Endonuclease that resolves HJ intermediates. Cleaves cruciform DNA by making single-stranded nicks across the HJ at symmetrical positions within the homologous arms, yielding a 5'-phosphate and a 3'-hydroxyl group; requires a central core of homology in the junction. The consensus cleavage sequence is 5'-(A/T)TT(C/G)-3'. Cleavage occurs on the 3'-side of the TT dinucleotide at the point of strand exchange. HJ branch migration catalyzed by RuvA-RuvB allows RuvC to scan DNA until it finds its consensus sequence, where it cleaves and resolves the cruciform DNA. This is Crossover junction endodeoxyribonuclease RuvC from Polaromonas naphthalenivorans (strain CJ2).